A 56-amino-acid polypeptide reads, in one-letter code: uncharacterized protein (56 aa).

This is an uncharacterized protein from Bacillus subtilis (strain 168).